Here is a 189-residue protein sequence, read N- to C-terminus: Early E3 20.5 kDa glycoprotein (189 aa).

Residues Asn-73 and Asn-137 are each glycosylated (N-linked (GlcNAc...) asparagine; by host).

It belongs to the adenoviridae E3_20 family.

Its function is as follows. E3 proteins seem to be dispensable for virus growth in tissue culture cells. They are potentially important for virus growth under special conditions; E3 region may help adenoviruses to evade the immune surveillance of the host. In Homo sapiens (Human), this protein is Early E3 20.5 kDa glycoprotein.